The following is a 251-amino-acid chain: Cobalt transport protein CbiM (251 aa).

The first 27 residues, 1-27 (MNKKKNTILIGLYFLVGIMLFPDRIYA), serve as a signal peptide directing secretion. 6 consecutive transmembrane segments (helical) span residues 35–55 (LPVKWAGIWWIAMLPFLALGI), 66–86 (GPGIKMLLALAGAFVFVLSSL), 103–123 (LGAILFGPWPMVVLGCIVLIF), 131–151 (GGLTTLGANVFSMAIVGPFVA), 166–186 (WLSVFTGSALGNLLTYITTAT), and 208–228 (VFATTQVPLAVTEGLVTVLIF).

Belongs to the CbiM family. In terms of assembly, forms an energy-coupling factor (ECF) transporter complex composed of an ATP-binding protein (A component, CbiO), a transmembrane protein (T component, CbiQ) and 2 possible substrate-capture proteins (S components, CbiM and CbiN) of unknown stoichimetry.

It is found in the cell membrane. The protein operates within cofactor biosynthesis; adenosylcobalamin biosynthesis. Functionally, part of the energy-coupling factor (ECF) transporter complex CbiMNOQ involved in cobalt import. The protein is Cobalt transport protein CbiM of Acetohalobium arabaticum (strain ATCC 49924 / DSM 5501 / Z-7288).